The chain runs to 326 residues: Isoaspartyl peptidase/L-asparaginase (326 aa).

Threonine 185 functions as the Nucleophile in the catalytic mechanism. Residues 213-216 (RVGD) and 236-239 (TGHG) each bind substrate.

It belongs to the Ntn-hydrolase family. In terms of assembly, heterodimer of an alpha and beta chain produced by autocleavage. This heterodimer may then dimerize in turn, giving rise to a heterotetramer. In terms of processing, cleaved into an alpha and beta chain by autocatalysis; this activates the enzyme. The N-terminal residue of the beta subunit is responsible for the nucleophile hydrolase activity. As to expression, high expression in the heart and brain while low to minimal expression in the other tissues. In ocular tissues, high levels is observed in the optic nerve and retina while relatively low levels of expression are detected in the iris-ciliary body, lens or retinal pigment epithelium.

The protein localises to the cytoplasm. The catalysed reaction is L-asparagine + H2O = L-aspartate + NH4(+). It carries out the reaction Cleavage of a beta-linked Asp residue from the N-terminus of a polypeptide.. In terms of biological role, has both L-asparaginase and beta-aspartyl peptidase activity. May be involved in the production of L-aspartate, which can act as an excitatory neurotransmitter in some brain regions. Is highly active with L-Asp beta-methyl ester. Besides, has catalytic activity toward beta-aspartyl dipeptides and their methyl esters, including beta-L-Asp-L-Phe, beta-L-Asp-L-Phe methyl ester (aspartame), beta-L-Asp-L-Ala, beta-L-Asp-L-Leu and beta-L-Asp-L-Lys. Does not have aspartylglucosaminidase activity and is inactive toward GlcNAc-L-Asn. Likewise, has no activity toward glutamine. In Mus musculus (Mouse), this protein is Isoaspartyl peptidase/L-asparaginase (Asrgl1).